Reading from the N-terminus, the 217-residue chain is Transcription antitermination protein NusB (217 aa).

It belongs to the NusB family.

Involved in transcription antitermination. Required for transcription of ribosomal RNA (rRNA) genes. Binds specifically to the boxA antiterminator sequence of the ribosomal RNA (rrn) operons. The protein is Transcription antitermination protein NusB of Microcystis aeruginosa (strain NIES-843 / IAM M-2473).